Here is a 708-residue protein sequence, read N- to C-terminus: Polyribonucleotide nucleotidyltransferase (708 aa).

Mg(2+)-binding residues include Asp-488 and Asp-494. Residues 555-615 (PIIKVTKVDP…ENVDKAIELI (61 aa)) enclose the KH domain. The S1 motif domain maps to 625-692 (GEVLEGKVTR…DLGRLQFKRV (68 aa)).

This sequence belongs to the polyribonucleotide nucleotidyltransferase family. Requires Mg(2+) as cofactor.

The protein localises to the cytoplasm. The catalysed reaction is RNA(n+1) + phosphate = RNA(n) + a ribonucleoside 5'-diphosphate. In terms of biological role, involved in mRNA degradation. Catalyzes the phosphorolysis of single-stranded polyribonucleotides processively in the 3'- to 5'-direction. The polypeptide is Polyribonucleotide nucleotidyltransferase (Thermotoga petrophila (strain ATCC BAA-488 / DSM 13995 / JCM 10881 / RKU-1)).